The following is a 141-amino-acid chain: Protein X (141 aa).

Residues 24–48 are compositionally biased toward low complexity; that stretch reads QSSGPPFPRPSAGSAASPASSLSAS. Residues 24-51 are disordered; it reads QSSGPPFPRPSAGSAASPASSLSASDES. Residues 68–113 are mitochondrial targeting sequence; it reads PCCLVVTCAELRTMDSTVNFVSWHANRQLGMPSKDLWTPYIRDQLL.

Belongs to the orthohepadnavirus protein X family. As to quaternary structure, may form homodimer. May interact with host CEBPA, CFLAR, CREB1, DDB1, E4F1, HBXIP, HSPD1/HSP60, NFKBIA, POLR2E and SMAD4. Interacts with host SMC5-SMC6 complex and induces its degradation. Interacts with host TRPC4AP; leading to prevent ubiquitination of TRPC4AP. Interacts with host PLSCR1; this interaction promotes ubiquitination and degradation of HBx and impairs HBx-mediated cell proliferation. Post-translationally, a fraction may be phosphorylated in insect cells and HepG2 cells, a human hepatoblastoma cell line. Phosphorylated in vitro by host protein kinase C or mitogen-activated protein kinase. N-acetylated in insect cells.

The protein resides in the host cytoplasm. It is found in the host nucleus. Its subcellular location is the host mitochondrion. Its function is as follows. Multifunctional protein that plays a role in silencing host antiviral defenses and promoting viral transcription. Does not seem to be essential for HBV infection. May be directly involved in development of cirrhosis and liver cancer (hepatocellular carcinoma). Most of cytosolic activities involve modulation of cytosolic calcium. The effect on apoptosis is controversial depending on the cell types in which the studies have been conducted. May induce apoptosis by localizing in mitochondria and causing loss of mitochondrial membrane potential. May also modulate apoptosis by binding host CFLAR, a key regulator of the death-inducing signaling complex (DISC). Promotes viral transcription by using the host E3 ubiquitin ligase DDB1 to target the SMC5-SMC6 complex to proteasomal degradation. This host complex would otherwise bind to viral episomal DNA, and prevents its transcription. Moderately stimulates transcription of many different viral and cellular transcription elements. Promoters and enhancers stimulated by HBx contain DNA binding sites for NF-kappa-B, AP-1, AP-2, c-EBP, ATF/CREB, or the calcium-activated factor NF-AT. This chain is Protein X, found in Woodchuck hepatitis B virus (isolate 1) (WHV).